The sequence spans 349 residues: Hydroxymethylglutaryl-CoA synthase (349 aa).

Positions 30 and 31 each coordinate (3S)-3-hydroxy-3-methylglutaryl-CoA. The active-site Proton donor/acceptor is the Glu-82. The (3S)-3-hydroxy-3-methylglutaryl-CoA site is built by Cys-114 and Thr-155. The active-site Acyl-thioester intermediate is Cys-114. Arg-203 contributes to the CoA binding site. (3S)-3-hydroxy-3-methylglutaryl-CoA is bound by residues Thr-205 and His-238. Residue His-238 is the Proton donor/acceptor of the active site. Lys-243 serves as a coordination point for CoA. (3S)-3-hydroxy-3-methylglutaryl-CoA is bound by residues Asn-270 and Ser-300.

Belongs to the thiolase-like superfamily. Archaeal HMG-CoA synthase family. In terms of assembly, interacts with acetoacetyl-CoA thiolase that catalyzes the precedent step in the pathway and with a DUF35 protein. The acetoacetyl-CoA thiolase/HMG-CoA synthase complex channels the intermediate via a fused CoA-binding site, which allows for efficient coupling of the endergonic thiolase reaction with the exergonic HMGCS reaction.

It carries out the reaction acetoacetyl-CoA + acetyl-CoA + H2O = (3S)-3-hydroxy-3-methylglutaryl-CoA + CoA + H(+). It functions in the pathway metabolic intermediate biosynthesis; (R)-mevalonate biosynthesis; (R)-mevalonate from acetyl-CoA: step 2/3. Catalyzes the condensation of acetyl-CoA with acetoacetyl-CoA to form 3-hydroxy-3-methylglutaryl-CoA (HMG-CoA). Functions in the mevalonate (MVA) pathway leading to isopentenyl diphosphate (IPP), a key precursor for the biosynthesis of isoprenoid compounds that are building blocks of archaeal membrane lipids. In Methanococcus maripaludis (strain C5 / ATCC BAA-1333), this protein is Hydroxymethylglutaryl-CoA synthase.